The chain runs to 1341 residues: Subtilisin-like protease 2 (1341 aa).

The N-terminal stretch at M1 to Y18 is a signal peptide. Residues K19–L686 constitute a propeptide, inhibition peptide. Disordered regions lie at residues E85–K107 and A143–N171. N-linked (GlcNAc...) asparagine glycosylation is found at N165, N343, N449, N453, and N492. Residues K415–S474 are disordered. A compositionally biased stretch (low complexity) spans N430–S474. Residues I499–K530 are disordered. A compositionally biased stretch (basic and acidic residues) spans N502–T515. Low complexity predominate over residues K517–K530. N-linked (GlcNAc...) asparagine glycosylation is found at N550, N641, and N728. Topologically, residues N687–H1136 are extracellular. Residues T726 to V1019 form the Peptidase S8 domain. Active-site charge relay system residues include D754 and H797. 4 N-linked (GlcNAc...) asparagine glycosylation sites follow: N820, N856, N892, and N950. The active-site Charge relay system is the S960. N-linked (GlcNAc...) asparagine glycans are attached at residues N1009 and N1105. The chain crosses the membrane as a helical span at residues Y1137 to I1157. Residues Y1158–K1341 lie on the Cytoplasmic side of the membrane.

The protein belongs to the peptidase S8 family. Proteolytically cleaved at the N-terminus to generate a 74kDa intermediate which is further processed into a 72kDa form. The first maturation cleavage is autocatalytic, occurs in the ER and is necessary for the subsequent SUB2 trafficking to the microneme. The second cleavage may be mediated by PMX/plasmepsin X.

Its subcellular location is the cell membrane. The protein resides in the cytoplasmic vesicle. It is found in the secretory vesicle. The protein localises to the microneme membrane. It catalyses the reaction Hydrolysis of proteins with broad specificity for peptide bonds, and a preference for a large uncharged residue in P1. Hydrolyzes peptide amides.. With respect to regulation, activation may be calcium-dependent. Inhibited by the non-covalent interaction with the cleaved propeptide. Serine protease which plays an essential role in the shedding of AMA1, MSP1 and MSP7 from the surface of the invading merozoite; this step is essential for productive invasion and the release of the adhesion between the erythrocyte and the merozoite. May cleave TRAMP/PTTRAMP, thereby shedding TRAMP from the merozoite surface during erythrocyte invasion. This is Subtilisin-like protease 2 from Plasmodium falciparum (isolate 3D7).